An 858-amino-acid polypeptide reads, in one-letter code: DNA mismatch repair protein MutS (858 aa).

Residue 609-616 (GPNMSGKS) participates in ATP binding.

It belongs to the DNA mismatch repair MutS family.

This protein is involved in the repair of mismatches in DNA. It is possible that it carries out the mismatch recognition step. This protein has a weak ATPase activity. The polypeptide is DNA mismatch repair protein MutS (Enterococcus faecalis (strain ATCC 700802 / V583)).